Consider the following 86-residue polypeptide: Anti-adapter protein IraP (86 aa).

Positions 1 to 36 form a coiled coil; it reads MKNLIAELLLKLAQKEEESKELCAQVEALEIIVTAM.

It belongs to the IraP family. In terms of assembly, interacts with RssB.

Its subcellular location is the cytoplasm. In terms of biological role, inhibits RpoS proteolysis by regulating RssB activity, thereby increasing the stability of the sigma stress factor RpoS especially during phosphate starvation, but also in stationary phase and during nitrogen starvation. Its effect on RpoS stability is due to its interaction with RssB, which probably blocks the interaction of RssB with RpoS, and the consequent delivery of the RssB-RpoS complex to the ClpXP protein degradation pathway. The chain is Anti-adapter protein IraP from Shigella boydii serotype 18 (strain CDC 3083-94 / BS512).